The primary structure comprises 281 residues: Pantothenate synthetase (281 aa).

31-38 (MGALHDGH) lines the ATP pocket. The active-site Proton donor is the His38. Gln62 serves as a coordination point for (R)-pantoate. Gln62 contacts beta-alanine. 148-151 (GQKD) provides a ligand contact to ATP. Gln154 provides a ligand contact to (R)-pantoate. Residues Val177 and 185–188 (LSSR) contribute to the ATP site.

It belongs to the pantothenate synthetase family. In terms of assembly, homodimer.

It is found in the cytoplasm. It carries out the reaction (R)-pantoate + beta-alanine + ATP = (R)-pantothenate + AMP + diphosphate + H(+). It functions in the pathway cofactor biosynthesis; (R)-pantothenate biosynthesis; (R)-pantothenate from (R)-pantoate and beta-alanine: step 1/1. Its function is as follows. Catalyzes the condensation of pantoate with beta-alanine in an ATP-dependent reaction via a pantoyl-adenylate intermediate. The protein is Pantothenate synthetase of Dinoroseobacter shibae (strain DSM 16493 / NCIMB 14021 / DFL 12).